The primary structure comprises 229 residues: Potassium/proton antiporter CemA (229 aa).

3 helical membrane-spanning segments follow: residues 7 to 27, 106 to 126, and 193 to 213; these read LTPFPYLASIVFLPWGISLSF, LILHFSTNIICFTILSAYSIL, and LVSTFPVIIDTILKYWIFLFL.

It belongs to the CemA family.

Its subcellular location is the plastid. It localises to the chloroplast inner membrane. The catalysed reaction is K(+)(in) + H(+)(out) = K(+)(out) + H(+)(in). Contributes to K(+)/H(+) antiport activity by supporting proton efflux to control proton extrusion and homeostasis in chloroplasts in a light-dependent manner to modulate photosynthesis. Prevents excessive induction of non-photochemical quenching (NPQ) under continuous-light conditions. Indirectly promotes efficient inorganic carbon uptake into chloroplasts. In Illicium oligandrum (Star anise), this protein is Potassium/proton antiporter CemA.